The sequence spans 354 residues: Uroporphyrinogen decarboxylase (354 aa).

Substrate contacts are provided by residues 27–31 (RQAGR), aspartate 77, tyrosine 154, threonine 209, and histidine 327.

The protein belongs to the uroporphyrinogen decarboxylase family. Homodimer.

The protein localises to the cytoplasm. It catalyses the reaction uroporphyrinogen III + 4 H(+) = coproporphyrinogen III + 4 CO2. It participates in porphyrin-containing compound metabolism; protoporphyrin-IX biosynthesis; coproporphyrinogen-III from 5-aminolevulinate: step 4/4. Catalyzes the decarboxylation of four acetate groups of uroporphyrinogen-III to yield coproporphyrinogen-III. The sequence is that of Uroporphyrinogen decarboxylase from Escherichia coli O81 (strain ED1a).